A 302-amino-acid chain; its full sequence is Sulfate adenylyltransferase subunit 2 (302 aa).

This sequence belongs to the PAPS reductase family. CysD subfamily. Heterodimer composed of CysD, the smaller subunit, and CysN.

It catalyses the reaction sulfate + ATP + H(+) = adenosine 5'-phosphosulfate + diphosphate. It functions in the pathway sulfur metabolism; hydrogen sulfide biosynthesis; sulfite from sulfate: step 1/3. In terms of biological role, with CysN forms the ATP sulfurylase (ATPS) that catalyzes the adenylation of sulfate producing adenosine 5'-phosphosulfate (APS) and diphosphate, the first enzymatic step in sulfur assimilation pathway. APS synthesis involves the formation of a high-energy phosphoric-sulfuric acid anhydride bond driven by GTP hydrolysis by CysN coupled to ATP hydrolysis by CysD. The sequence is that of Sulfate adenylyltransferase subunit 2 from Zymomonas mobilis subsp. mobilis (strain ATCC 31821 / ZM4 / CP4).